Here is a 290-residue protein sequence, read N- to C-terminus: 33 kDa chaperonin (290 aa).

2 cysteine pairs are disulfide-bonded: Cys235/Cys237 and Cys268/Cys271.

It belongs to the HSP33 family. In terms of processing, under oxidizing conditions two disulfide bonds are formed involving the reactive cysteines. Under reducing conditions zinc is bound to the reactive cysteines and the protein is inactive.

It is found in the cytoplasm. In terms of biological role, redox regulated molecular chaperone. Protects both thermally unfolding and oxidatively damaged proteins from irreversible aggregation. Plays an important role in the bacterial defense system toward oxidative stress. In Streptococcus pyogenes serotype M4 (strain MGAS10750), this protein is 33 kDa chaperonin.